A 504-amino-acid polypeptide reads, in one-letter code: Cytochrome P450 monooxygenase gliF (504 aa).

The chain crosses the membrane as a helical span at residues 13–31 (AVAVSFGVGLLYWVYRLLL). 2 N-linked (GlcNAc...) asparagine glycosylation sites follow: N197 and N299. Position 449 (C449) interacts with heme.

It belongs to the cytochrome P450 family. Heme is required as a cofactor.

It localises to the membrane. The protein operates within mycotoxin biosynthesis. Functionally, cytochrome P450 monooxygenase; part of the gene cluster that mediates the biosynthesis of gliotoxin, a member of the epipolythiodioxopiperazine (ETP) class of toxins characterized by a disulfide bridged cyclic dipeptide. The first step in gliotoxin biosynthesis is the condensation of serine and phenylalanine to form the cyclo-L-phenylalanyl-L-serine diketopiperazine (DKP) by the NRPS gliP. GliP is also able to produce the DKP cyclo-L-tryptophanyl-L-serine, suggesting that the substrate specificity of the first adenylation (A) domain in gliP is sufficiently relaxed to accommodate both L-Phe and L-Trp. The cytochrome P450 monooxygenase gliC has been shown to catalyze the subsequent hydroxylation of the alpha-carbon of L-Phe in cyclo-L-phenylalanyl-L-serine whereas the second cytochrome P450 enzyme, gliF, is presumably involved in the modification of the DKP side chain. The glutathione S-transferase (GST) gliG then forms a bis-glutathionylated biosynthetic intermediate which is responsible for the sulfurization of gliotoxin. This bis-glutathionylated intermediate is subsequently processed by the gamma-glutamyl cyclotransferase gliK to remove both gamma-glutamyl moieties. Subsequent processing via gliI yields a biosynthetic intermediate, which is N-methylated via the N-methyltransferase gliN, before the gliotoxin oxidoreductase gliT-mediated disulfide bridge closure. GliN-mediated amide methylation confers stability to ETP, damping the spontaneous formation of tri- and tetrasulfides. Intracellular dithiol gliotoxin oxidized by gliT is subsequently effluxed by gliA. Gliotoxin contributes to pathogenesis during invasive aspergillosis. In macrophages and neutrophils, gliotoxin showed inhibition of various different cell functions including cytokine production, antigen presentation, phagocytosis, and production of reactive oxygen species. The protein is Cytochrome P450 monooxygenase gliF of Aspergillus fumigatus (strain ATCC MYA-4609 / CBS 101355 / FGSC A1100 / Af293) (Neosartorya fumigata).